The chain runs to 496 residues: Glycine receptor subunit beta (496 aa).

The N-terminal stretch at 1–22 (MKFSLAVSFFILMSLLFEDACS) is a signal peptide. At 23–268 (KEKSSKKGKG…IFTLRRQVGF (246 aa)) the chain is on the extracellular side. N54 carries an N-linked (GlcNAc...) asparagine glycan. 2 residues coordinate glycine: R108 and S174. C183 and C197 form a disulfide bridge. N242 is a glycosylation site (N-linked (GlcNAc...) asparagine). Cysteines 243 and 255 form a disulfide. Residue T250 coordinates glycine. Residues 269–289 (YMMGVYAPTLLIVVLSWLSFW) traverse the membrane as a helical segment. Topologically, residues 290–294 (INPDA) are cytoplasmic. Residues 295 to 315 (SAARVPLGIFSVLSLASECTT) traverse the membrane as a helical segment. Over 316–327 (LAAELPKVSYVK) the chain is Extracellular. A helical transmembrane segment spans residues 328 to 349 (ALDVWLIACLLFGFASLVEYAV). Over 350 to 471 (VQVMLNNPKR…KPVIPTAAKR (122 aa)) the chain is Cytoplasmic. T391 bears the Phosphothreonine mark. Residues 472 to 495 (IDLYARALFPFCFLFFNVIYWSIY) form a helical membrane-spanning segment. Residue L496 is a topological domain, extracellular.

Belongs to the ligand-gated ion channel (TC 1.A.9) family. Glycine receptor (TC 1.A.9.3) subfamily. GLRB sub-subfamily. In terms of assembly, forms heteropentamers with glycin receptor alpha subunits. Heteropentamers with GLRA1 can be composed of two GLRA1 and three GLRB subunits, or three GLRA1 and two GLRB subunits, or four GLRA1 subunits and one GLRB subunit. Forms heteropentamers with GLRA2. Functional GLRB-GLRA2 heteropentamers contain four GLRA2 subunits and one GLRB subunit, although alternative subunit composition cannot be excluded. Forms a heteropentamer with GLRA3. Interacts with GPHN. Detected in spinal cord and brain stem (at protein level). Detected in spinal cord, cerebellum and brain cortex.

The protein localises to the postsynaptic cell membrane. Its subcellular location is the cell membrane. The protein resides in the synapse. It is found in the perikaryon. It localises to the cell projection. The protein localises to the dendrite. Its subcellular location is the cytoplasm. The catalysed reaction is chloride(in) = chloride(out). With respect to regulation, channel opening is triggered by extracellular glycine. Heteropentameric channels composed of GLRB and GLRA1 are activated by lower glycine levels than homopentameric GLRA1. Subunit of heteromeric glycine-gated chloride channels. Plays an important role in the down-regulation of neuronal excitability. Contributes to the generation of inhibitory postsynaptic currents. The protein is Glycine receptor subunit beta (Glrb) of Rattus norvegicus (Rat).